The sequence spans 443 residues: Glutamine synthetase (443 aa).

In terms of domain architecture, GS beta-grasp spans 11-97 (VQVEVPRPRF…VYGYIYKGDE (87 aa)). Positions 103–443 (PRGILKRVLE…EWELERYFYV (341 aa)) constitute a GS catalytic domain. The Mg(2+) site is built by Glu-126 and Glu-128. Glu-176 provides a ligand contact to ATP. 2 residues coordinate Mg(2+): Glu-181 and Glu-188. Gly-233 provides a ligand contact to L-glutamate. His-237 provides a ligand contact to Mg(2+). Residues 239–241 (HIS) and Ser-241 each bind ATP. Arg-287, Glu-293, and Arg-305 together coordinate L-glutamate. ATP is bound by residues Arg-305 and Arg-310. Mg(2+) is bound at residue Glu-322. An L-glutamate-binding site is contributed by Arg-324.

The protein belongs to the glutamine synthetase family. In terms of assembly, oligomer of 12 subunits arranged in the form of two hexagons. It depends on Mg(2+) as a cofactor. Mn(2+) is required as a cofactor.

It is found in the cytoplasm. It catalyses the reaction L-glutamate + NH4(+) + ATP = L-glutamine + ADP + phosphate + H(+). The enzyme catalyses hydroxylamine + L-glutamate + ATP = L-glutamine hydroxamate + ADP + phosphate. Its activity is regulated as follows. The activity of this enzyme is not controlled by adenylation. Its function is as follows. Carries out the ATP-dependent synthesis of glutamine from ammonium nitrogen and glutamate. Exhibits both L-gamma-glutamylhydroxamate synthetase and gamma-glutamyltransferase activities when using hydroxylamine as substrate; in fact, the enzyme possesses low biosynthetic activity, suggesting that the reaction is biased towards the degradation of glutamine under ammonia-rich conditions. Might play some role in ammonia assimilation under ammonia-starvation conditions. Can also use GTP instead of ATP in the synthetase reaction, but not CTP or UTP. In Thermococcus kodakarensis (strain ATCC BAA-918 / JCM 12380 / KOD1) (Pyrococcus kodakaraensis (strain KOD1)), this protein is Glutamine synthetase.